The sequence spans 302 residues: Flavin-dependent thymidylate synthase (302 aa).

Residues 43–257 (GFVRVIDYMG…PFAYKAFEDY (215 aa)) form the ThyX domain. FAD contacts are provided by residues threonine 89, 112 to 114 (RHR), and glutamate 120. DUMP-binding positions include 109–112 (QWIR), 120–124 (EYSAR), and arginine 196. A ThyX motif motif is present at residues 112–122 (RHRTANVNEYS). Residues 212-214 (DLH) and histidine 218 contribute to the FAD site. Arginine 223 lines the dUMP pocket. Residue arginine 223 is the Involved in ionization of N3 of dUMP, leading to its activation of the active site.

Belongs to the thymidylate synthase ThyX family. As to quaternary structure, homotetramer. It depends on FAD as a cofactor.

It carries out the reaction dUMP + (6R)-5,10-methylene-5,6,7,8-tetrahydrofolate + NADPH + H(+) = dTMP + (6S)-5,6,7,8-tetrahydrofolate + NADP(+). It functions in the pathway pyrimidine metabolism; dTTP biosynthesis. In terms of biological role, catalyzes the reductive methylation of 2'-deoxyuridine-5'-monophosphate (dUMP) to 2'-deoxythymidine-5'-monophosphate (dTMP) while utilizing 5,10-methylenetetrahydrofolate (mTHF) as the methyl donor, and NADPH and FADH(2) as the reductant. In Ruegeria pomeroyi (strain ATCC 700808 / DSM 15171 / DSS-3) (Silicibacter pomeroyi), this protein is Flavin-dependent thymidylate synthase.